The following is a 516-amino-acid chain: D-aminopeptidase (516 aa).

Serine 61 acts as the Nucleophile in catalysis. The active-site Proton donor/acceptor is the lysine 64. The tract at residues 476–486 (RRSMDAPAPGD) is important for specificity. Position 480 (aspartate 480) interacts with substrate.

This sequence belongs to the peptidase S12 family. Homodimer.

The enzyme catalyses Release of an N-terminal D-amino acid from a peptide, Xaa-|-Yaa-, in which Xaa is preferably D-Ala, D-Ser or D-Thr. D-amino acid amides and methyl esters also are hydrolyzed, as is glycine amide.. Inhibited by beta-lactam compounds such as 6-aminopenicillic acid, 7-aminocephalosporanic acid, benzylpenicillin and ampicillin. Inhibited by p-chloromercuribenzoate. Functionally, hydrolyzes N-terminal residues in D-amino acid-containing peptides. The polypeptide is D-aminopeptidase (Cereibacter sphaeroides (strain KD131 / KCTC 12085) (Rhodobacter sphaeroides)).